A 443-amino-acid chain; its full sequence is Thymidine phosphorylase (443 aa).

This sequence belongs to the thymidine/pyrimidine-nucleoside phosphorylase family. As to quaternary structure, homodimer.

The catalysed reaction is thymidine + phosphate = 2-deoxy-alpha-D-ribose 1-phosphate + thymine. It functions in the pathway pyrimidine metabolism; dTMP biosynthesis via salvage pathway; dTMP from thymine: step 1/2. Its function is as follows. The enzymes which catalyze the reversible phosphorolysis of pyrimidine nucleosides are involved in the degradation of these compounds and in their utilization as carbon and energy sources, or in the rescue of pyrimidine bases for nucleotide synthesis. This is Thymidine phosphorylase from Shewanella baltica (strain OS223).